Consider the following 464-residue polypeptide: tRNA-2-methylthio-N(6)-dimethylallyladenosine synthase (464 aa).

In terms of domain architecture, MTTase N-terminal spans 19-135 (GSYWITTFGC…LENLLGKVDL (117 aa)). 6 residues coordinate [4Fe-4S] cluster: cysteine 28, cysteine 64, cysteine 98, cysteine 170, cysteine 174, and cysteine 177. One can recognise a Radical SAM core domain in the interval 156–393 (RESSICGWVN…NELVETTSKQ (238 aa)). Residues 396-464 (ERYLDSIESV…PFSLTGILCL (69 aa)) enclose the TRAM domain.

This sequence belongs to the methylthiotransferase family. MiaB subfamily. Monomer. [4Fe-4S] cluster serves as cofactor.

It localises to the cytoplasm. The enzyme catalyses N(6)-dimethylallyladenosine(37) in tRNA + (sulfur carrier)-SH + AH2 + 2 S-adenosyl-L-methionine = 2-methylsulfanyl-N(6)-dimethylallyladenosine(37) in tRNA + (sulfur carrier)-H + 5'-deoxyadenosine + L-methionine + A + S-adenosyl-L-homocysteine + 2 H(+). Functionally, catalyzes the methylthiolation of N6-(dimethylallyl)adenosine (i(6)A), leading to the formation of 2-methylthio-N6-(dimethylallyl)adenosine (ms(2)i(6)A) at position 37 in tRNAs that read codons beginning with uridine. This is tRNA-2-methylthio-N(6)-dimethylallyladenosine synthase from Prochlorococcus marinus (strain MIT 9215).